We begin with the raw amino-acid sequence, 90 residues long: Probable Fe(2+)-trafficking protein (90 aa).

Belongs to the Fe(2+)-trafficking protein family.

Could be a mediator in iron transactions between iron acquisition and iron-requiring processes, such as synthesis and/or repair of Fe-S clusters in biosynthetic enzymes. This chain is Probable Fe(2+)-trafficking protein, found in Xylella fastidiosa (strain 9a5c).